Reading from the N-terminus, the 254-residue chain is 5'/3'-nucleotidase SurE (254 aa).

The a divalent metal cation site is built by D8, D9, S39, and N92.

This sequence belongs to the SurE nucleotidase family. A divalent metal cation serves as cofactor.

It is found in the cytoplasm. The catalysed reaction is a ribonucleoside 5'-phosphate + H2O = a ribonucleoside + phosphate. It catalyses the reaction a ribonucleoside 3'-phosphate + H2O = a ribonucleoside + phosphate. It carries out the reaction [phosphate](n) + H2O = [phosphate](n-1) + phosphate + H(+). Its function is as follows. Nucleotidase with a broad substrate specificity as it can dephosphorylate various ribo- and deoxyribonucleoside 5'-monophosphates and ribonucleoside 3'-monophosphates with highest affinity to 3'-AMP. Also hydrolyzes polyphosphate (exopolyphosphatase activity) with the preference for short-chain-length substrates (P20-25). Might be involved in the regulation of dNTP and NTP pools, and in the turnover of 3'-mononucleotides produced by numerous intracellular RNases (T1, T2, and F) during the degradation of various RNAs. In Edwardsiella ictaluri (strain 93-146), this protein is 5'/3'-nucleotidase SurE.